A 92-amino-acid chain; its full sequence is Arrestin-C (92 aa).

Belongs to the arrestin family. In terms of assembly, homodimer; disulfide-linked in response to retinal illumination. Interacts with CXCR4; the interaction is dependent on the C-terminal phosphorylation of CXCR4 and modulates the calcium ion mobilization activity of CXCR4. Interacts with GPR84. As to expression, retina and pineal gland.

It localises to the photoreceptor inner segment. The protein resides in the cell projection. The protein localises to the cilium. It is found in the photoreceptor outer segment. In terms of biological role, may play a role in an as yet undefined retina-specific signal transduction. Could bind to photoactivated-phosphorylated red/green opsins. The polypeptide is Arrestin-C (Arr3) (Rattus norvegicus (Rat)).